A 271-amino-acid polypeptide reads, in one-letter code: Formamidopyrimidine-DNA glycosylase (271 aa).

Pro2 (schiff-base intermediate with DNA) is an active-site residue. Glu3 (proton donor) is an active-site residue. Lys58 (proton donor; for beta-elimination activity) is an active-site residue. DNA contacts are provided by His91 and Arg109. Residues 236–270 (FVYGREGLACRVCATPVRRVVIGQRSTFFCPRCQR) form an FPG-type zinc finger. The active-site Proton donor; for delta-elimination activity is the Arg260.

This sequence belongs to the FPG family. As to quaternary structure, monomer. Zn(2+) is required as a cofactor.

It carries out the reaction Hydrolysis of DNA containing ring-opened 7-methylguanine residues, releasing 2,6-diamino-4-hydroxy-5-(N-methyl)formamidopyrimidine.. The catalysed reaction is 2'-deoxyribonucleotide-(2'-deoxyribose 5'-phosphate)-2'-deoxyribonucleotide-DNA = a 3'-end 2'-deoxyribonucleotide-(2,3-dehydro-2,3-deoxyribose 5'-phosphate)-DNA + a 5'-end 5'-phospho-2'-deoxyribonucleoside-DNA + H(+). Involved in base excision repair of DNA damaged by oxidation or by mutagenic agents. Acts as a DNA glycosylase that recognizes and removes damaged bases. Has a preference for oxidized purines, such as 7,8-dihydro-8-oxoguanine (8-oxoG). Has AP (apurinic/apyrimidinic) lyase activity and introduces nicks in the DNA strand. Cleaves the DNA backbone by beta-delta elimination to generate a single-strand break at the site of the removed base with both 3'- and 5'-phosphates. In Aromatoleum aromaticum (strain DSM 19018 / LMG 30748 / EbN1) (Azoarcus sp. (strain EbN1)), this protein is Formamidopyrimidine-DNA glycosylase.